We begin with the raw amino-acid sequence, 243 residues long: Tryptophan synthase alpha chain (243 aa).

Active-site proton acceptor residues include E31 and D42.

It belongs to the TrpA family. In terms of assembly, tetramer of two alpha and two beta chains.

It carries out the reaction (1S,2R)-1-C-(indol-3-yl)glycerol 3-phosphate + L-serine = D-glyceraldehyde 3-phosphate + L-tryptophan + H2O. The protein operates within amino-acid biosynthesis; L-tryptophan biosynthesis; L-tryptophan from chorismate: step 5/5. Its function is as follows. The alpha subunit is responsible for the aldol cleavage of indoleglycerol phosphate to indole and glyceraldehyde 3-phosphate. In Staphylococcus epidermidis (strain ATCC 35984 / DSM 28319 / BCRC 17069 / CCUG 31568 / BM 3577 / RP62A), this protein is Tryptophan synthase alpha chain.